A 332-amino-acid polypeptide reads, in one-letter code: CAX-interacting protein 4 (332 aa).

Residues 33–59 (GYDPYAPTSKEEPKTTQQKTEDPENSY) form a disordered region. Residues 41–54 (SKEEPKTTQQKTED) are compositionally biased toward basic and acidic residues. A CCHC-type zinc finger spans residues 81–98 (GSCKKCGRVGHLTFQCRN). Basic and acidic residues predominate over residues 124-133 (IRRGVGKGEV). The disordered stretch occupies residues 124 to 332 (IRRGVGKGEV…RKRHHRKERE (209 aa)). The span at 134–153 (EEVSSEEEEESESSDSDVDS) shows a compositional bias: acidic residues. The span at 154–163 (EMERIIAERF) shows a compositional bias: basic and acidic residues. 2 stretches are compositionally biased toward basic residues: residues 198–214 (RKRR…HKRR) and 227–236 (SKRRKERRGR). Residues 241–250 (DDSDESEDED) are compositionally biased toward acidic residues. 2 stretches are compositionally biased toward basic residues: residues 254-269 (VKRK…RSRR) and 314-332 (SSKR…KERE).

In terms of assembly, interacts with CAX1. Expressed in leaves, stems and roots, and at lower levels in flowers.

The protein resides in the nucleus. In terms of biological role, may regulate CAX1 cation transporter. The chain is CAX-interacting protein 4 (CXIP4) from Arabidopsis thaliana (Mouse-ear cress).